A 507-amino-acid polypeptide reads, in one-letter code: ATP synthase subunit alpha (507 aa).

169–176 lines the ATP pocket; it reads GDRQIGKT.

This sequence belongs to the ATPase alpha/beta chains family. F-type ATPases have 2 components, CF(1) - the catalytic core - and CF(0) - the membrane proton channel. CF(1) has five subunits: alpha(3), beta(3), gamma(1), delta(1), epsilon(1). CF(0) has three main subunits: a(1), b(2) and c(9-12). The alpha and beta chains form an alternating ring which encloses part of the gamma chain. CF(1) is attached to CF(0) by a central stalk formed by the gamma and epsilon chains, while a peripheral stalk is formed by the delta and b chains.

Its subcellular location is the cell inner membrane. The catalysed reaction is ATP + H2O + 4 H(+)(in) = ADP + phosphate + 5 H(+)(out). Produces ATP from ADP in the presence of a proton gradient across the membrane. The alpha chain is a regulatory subunit. The sequence is that of ATP synthase subunit alpha from Desulfotalea psychrophila (strain LSv54 / DSM 12343).